Reading from the N-terminus, the 1382-residue chain is DNA-directed RNA polymerase subunit beta'' (1382 aa).

4 residues coordinate Zn(2+): Cys224, Cys294, Cys301, and Cys304.

Belongs to the RNA polymerase beta' chain family. RpoC2 subfamily. In terms of assembly, in plastids the minimal PEP RNA polymerase catalytic core is composed of four subunits: alpha, beta, beta', and beta''. When a (nuclear-encoded) sigma factor is associated with the core the holoenzyme is formed, which can initiate transcription. Requires Zn(2+) as cofactor.

The protein resides in the plastid. It is found in the chloroplast. It catalyses the reaction RNA(n) + a ribonucleoside 5'-triphosphate = RNA(n+1) + diphosphate. In terms of biological role, DNA-dependent RNA polymerase catalyzes the transcription of DNA into RNA using the four ribonucleoside triphosphates as substrates. The chain is DNA-directed RNA polymerase subunit beta'' from Dioscorea elephantipes (Elephant's foot yam).